The following is a 217-amino-acid chain: GTPase IMAP family member GIMD1 (217 aa).

The 212-residue stretch at 6–217 (KMIINLAVFG…ENHFQVLSLA (212 aa)) folds into the AIG1-type G domain. Residues 15 to 23 (GRTQSGKSS), Ser36, and 148 to 150 (HAE) contribute to the GTP site.

It belongs to the TRAFAC class TrmE-Era-EngA-EngB-Septin-like GTPase superfamily. AIG1/Toc34/Toc159-like paraseptin GTPase family. IAN subfamily.

In Mus musculus (Mouse), this protein is GTPase IMAP family member GIMD1 (Gimd1).